A 1238-amino-acid polypeptide reads, in one-letter code: Multifunctional 2-oxoglutarate metabolism enzyme (1238 aa).

Residues 1–41 (MANISSPFGQNEWLVEEMYRKFRDDPSSVDPSWHEFLVDYN) are 2-oxoglutarate dehydrogenase E1, N-terminal part. The segment at 42-97 (PESTAEPVLTDPTSTDKQPSATPQAKPAAAADPVASRAKPATTPTVANGTAAGSAA) is linker. Residues 44–108 (STAEPVLTDP…PAKTTTTPPI (65 aa)) form a disordered region. Low complexity predominate over residues 59–107 (QPSATPQAKPAAAADPVASRAKPATTPTVANGTAAGSAAAPAKTTTTPP). The tract at residues 98–346 (APAKTTTTPP…LRTIHEMVLS (249 aa)) is succinyltransferase E2. The active-site Proton acceptor; for succinyltransferase activity is the histidine 325. The segment at 347 to 1238 (DSFWDEIFRE…QQEILDTAFG (892 aa)) is 2-oxoglutarate dehydrogenase E1, C-terminal part. Thiamine diphosphate is bound at residue arginine 551. 2-oxoglutarate contacts are provided by histidine 590 and serine 615. Residues serine 615, leucine 617, aspartate 657, alanine 658, alanine 659, and asparagine 690 each contribute to the thiamine diphosphate site. Aspartate 657 serves as a coordination point for Mg(2+). Asparagine 690 and isoleucine 692 together coordinate Mg(2+). Positions 795–825 (DISLKEAEDALRDYQGQLERVFNEVRDLEKH) form a coiled coil. Residue histidine 1032 participates in 2-oxoglutarate binding. Threonine 1050, arginine 1066, lysine 1101, serine 1104, glutamine 1154, arginine 1161, and arginine 1162 together coordinate acetyl-CoA.

Belongs to the 2-oxoacid dehydrogenase family. Kgd subfamily. Homodimer. The 2-oxoglutarate dehydrogenase (ODH) complex contains multiple copies of three enzymatic components: 2-oxoglutarate dehydrogenase (E1), dihydrolipoamide succinyltransferase (E2) and lipoamide dehydrogenase (E3). The cofactor is Mg(2+). Thiamine diphosphate is required as a cofactor.

The enzyme catalyses glyoxylate + 2-oxoglutarate + H(+) = 2-hydroxy-3-oxoadipate + CO2. The catalysed reaction is 2-oxoglutarate + H(+) = succinate semialdehyde + CO2. It carries out the reaction N(6)-[(R)-lipoyl]-L-lysyl-[protein] + 2-oxoglutarate + H(+) = N(6)-[(R)-S(8)-succinyldihydrolipoyl]-L-lysyl-[protein] + CO2. It catalyses the reaction N(6)-[(R)-dihydrolipoyl]-L-lysyl-[protein] + succinyl-CoA = N(6)-[(R)-S(8)-succinyldihydrolipoyl]-L-lysyl-[protein] + CoA. It participates in carbohydrate metabolism; tricarboxylic acid cycle; succinate from 2-oxoglutarate (transferase route): step 1/2. Its pathway is carbohydrate metabolism; tricarboxylic acid cycle; succinyl-CoA from 2-oxoglutarate (dehydrogenase route): step 1/1. With respect to regulation, alpha-ketoglutarate dehydrogenase and decarboxylase activities are inhibited by unphosphorylated GarA, and allosterically activated by acetyl-CoA, the main substrate of the TCA cycle. In terms of biological role, shows three enzymatic activities that share a first common step, the attack of thiamine-PP on 2-oxoglutarate (alpha-ketoglutarate, KG), leading to the formation of an enamine-thiamine-PP intermediate upon decarboxylation. Thus, displays KGD activity, catalyzing the decarboxylation from five-carbon 2-oxoglutarate to four-carbon succinate semialdehyde (SSA). Also catalyzes C-C bond formation between the activated aldehyde formed after decarboxylation of alpha-ketoglutarate and the carbonyl of glyoxylate (GLX), to yield 2-hydroxy-3-oxoadipate (HOA), which spontaneously decarboxylates to form 5-hydroxylevulinate (HLA). And is also a component of the 2-oxoglutarate dehydrogenase (ODH) complex, that catalyzes the overall conversion of 2-oxoglutarate to succinyl-CoA and CO(2). The KG decarboxylase and KG dehydrogenase reactions provide two alternative, tightly regulated, pathways connecting the oxidative and reductive branches of the TCA cycle. This chain is Multifunctional 2-oxoglutarate metabolism enzyme (kgd), found in Mycobacterium leprae (strain TN).